Consider the following 475-residue polypeptide: Aspartyl/glutamyl-tRNA(Asn/Gln) amidotransferase subunit B (475 aa).

It belongs to the GatB/GatE family. GatB subfamily. Heterotrimer of A, B and C subunits.

It catalyses the reaction L-glutamyl-tRNA(Gln) + L-glutamine + ATP + H2O = L-glutaminyl-tRNA(Gln) + L-glutamate + ADP + phosphate + H(+). The enzyme catalyses L-aspartyl-tRNA(Asn) + L-glutamine + ATP + H2O = L-asparaginyl-tRNA(Asn) + L-glutamate + ADP + phosphate + 2 H(+). Functionally, allows the formation of correctly charged Asn-tRNA(Asn) or Gln-tRNA(Gln) through the transamidation of misacylated Asp-tRNA(Asn) or Glu-tRNA(Gln) in organisms which lack either or both of asparaginyl-tRNA or glutaminyl-tRNA synthetases. The reaction takes place in the presence of glutamine and ATP through an activated phospho-Asp-tRNA(Asn) or phospho-Glu-tRNA(Gln). This chain is Aspartyl/glutamyl-tRNA(Asn/Gln) amidotransferase subunit B, found in Bacillus cereus (strain G9842).